The sequence spans 510 residues: Probable ADP-ribosylation factor-binding protein C1F3.05 (510 aa).

Positions 14–150 (ATDQFNLEPN…LMAFRGYKFP (137 aa)) constitute a VHS domain. The region spanning 177-301 (LEAHKAKLQE…VIEECSNSDL (125 aa)) is the GAT domain. Positions 391 to 510 (TNSSLTSILQ…VEQGESHLPL (120 aa)) constitute a GAE domain.

It localises to the golgi apparatus. The protein localises to the trans-Golgi network. Its function is as follows. May play a role in the regulation of membrane traffic through the trans-Golgi network. The protein is Probable ADP-ribosylation factor-binding protein C1F3.05 of Schizosaccharomyces pombe (strain 972 / ATCC 24843) (Fission yeast).